Consider the following 145-residue polypeptide: D-aminoacyl-tRNA deacylase (145 aa).

The Gly-cisPro motif, important for rejection of L-amino acids motif lies at glycine 137–proline 138.

It belongs to the DTD family. Homodimer.

The protein resides in the cytoplasm. It carries out the reaction glycyl-tRNA(Ala) + H2O = tRNA(Ala) + glycine + H(+). It catalyses the reaction a D-aminoacyl-tRNA + H2O = a tRNA + a D-alpha-amino acid + H(+). Functionally, an aminoacyl-tRNA editing enzyme that deacylates mischarged D-aminoacyl-tRNAs. Also deacylates mischarged glycyl-tRNA(Ala), protecting cells against glycine mischarging by AlaRS. Acts via tRNA-based rather than protein-based catalysis; rejects L-amino acids rather than detecting D-amino acids in the active site. By recycling D-aminoacyl-tRNA to D-amino acids and free tRNA molecules, this enzyme counteracts the toxicity associated with the formation of D-aminoacyl-tRNA entities in vivo and helps enforce protein L-homochirality. This Citrobacter koseri (strain ATCC BAA-895 / CDC 4225-83 / SGSC4696) protein is D-aminoacyl-tRNA deacylase.